The sequence spans 119 residues: Large ribosomal subunit protein bL20 (119 aa).

It belongs to the bacterial ribosomal protein bL20 family.

Its function is as follows. Binds directly to 23S ribosomal RNA and is necessary for the in vitro assembly process of the 50S ribosomal subunit. It is not involved in the protein synthesizing functions of that subunit. The chain is Large ribosomal subunit protein bL20 from Streptococcus pneumoniae serotype 2 (strain D39 / NCTC 7466).